The following is a 610-amino-acid chain: DNA mismatch repair protein MutL (610 aa).

The protein belongs to the DNA mismatch repair MutL/HexB family.

This protein is involved in the repair of mismatches in DNA. It is required for dam-dependent methyl-directed DNA mismatch repair. May act as a 'molecular matchmaker', a protein that promotes the formation of a stable complex between two or more DNA-binding proteins in an ATP-dependent manner without itself being part of a final effector complex. In Rickettsia peacockii (strain Rustic), this protein is DNA mismatch repair protein MutL.